Here is a 169-residue protein sequence, read N- to C-terminus: MAGSELRAELEQRLGALAIRTEVVEHPEVFTIEEMMPHIQHLKGAHSKNLFLKDKKKKNYWLVTVLHDRQINLNDLGKQLGVGSGNLRFADETAMLEKLKVGQGCATPLSLFCDDGDVKFVLDSAFLEGGHEKVYFHPMTNAATMGLSPEDFLIFVKATGHDPIILNFD.

Belongs to the PRORSD1 family.

This chain is Prolyl-tRNA synthetase associated domain-containing protein 1 (Prorsd1), found in Mus musculus (Mouse).